We begin with the raw amino-acid sequence, 474 residues long: tRNA-2-methylthio-N(6)-dimethylallyladenosine synthase (474 aa).

An MTTase N-terminal domain is found at 3 to 120 (QKLHIKTWGC…LPEMINQIRA (118 aa)). The [4Fe-4S] cluster site is built by cysteine 12, cysteine 49, cysteine 83, cysteine 157, cysteine 161, and cysteine 164. The region spanning 143-375 (KAEGPTAFVS…QQRINNQAAQ (233 aa)) is the Radical SAM core domain. The TRAM domain maps to 378-441 (RAMLGTEQRV…TNSLRGDVVR (64 aa)).

Belongs to the methylthiotransferase family. MiaB subfamily. As to quaternary structure, monomer. [4Fe-4S] cluster is required as a cofactor.

The protein resides in the cytoplasm. The enzyme catalyses N(6)-dimethylallyladenosine(37) in tRNA + (sulfur carrier)-SH + AH2 + 2 S-adenosyl-L-methionine = 2-methylsulfanyl-N(6)-dimethylallyladenosine(37) in tRNA + (sulfur carrier)-H + 5'-deoxyadenosine + L-methionine + A + S-adenosyl-L-homocysteine + 2 H(+). Catalyzes the methylthiolation of N6-(dimethylallyl)adenosine (i(6)A), leading to the formation of 2-methylthio-N6-(dimethylallyl)adenosine (ms(2)i(6)A) at position 37 in tRNAs that read codons beginning with uridine. In Mannheimia succiniciproducens (strain KCTC 0769BP / MBEL55E), this protein is tRNA-2-methylthio-N(6)-dimethylallyladenosine synthase.